Reading from the N-terminus, the 380-residue chain is MGIQGLAKLIGDHAPGAMKENEIKNYFGRKVAIDASMSIYQFLIAVRQDGNMLTNDAGEATSHLMGMFYRTIRMVDNGIKPVYVFDGKPPNMKSGELAKRAERREEAQKALEKAEEAGEAEDVNKFQKRLVKVTKEHNAECKKLLTLMGIPYVDAPCEAEAQCAELAKKGKVYAAGTEDMDVLTFGTNIMLRHLTFSEARKMPIKEYYYDRLLAELDLTQDQFIDLCILLGCDYCDSIRGIGPKRAIELIRQYKSIEEILKHIDTKKFPVPEDWPYDQARKLFKEPEVTPADQVELKWVDPDEEGLVQYMSNEKGFSEDRIKNGAKKLKNARHTSTQGRLDSFFKVMSSPSVKRKEPPKGAKGSASKKAKMSGGKFKKPK.

An N-domain region spans residues 1-104; the sequence is MGIQGLAKLI…GELAKRAERR (104 aa). A Mg(2+)-binding site is contributed by D34. DNA is bound by residues R47 and R70. Mg(2+)-binding residues include D86, E158, E160, D179, and D181. The segment at 122 to 253 is I-domain; it reads DVNKFQKRLV…KRAIELIRQY (132 aa). E158 is a DNA binding site. Positions 231 and 233 each coordinate DNA. D233 lines the Mg(2+) pocket. Positions 328 to 380 are disordered; the sequence is LKNARHTSTQGRLDSFFKVMSSPSVKRKEPPKGAKGSASKKAKMSGGKFKKPK. The tract at residues 336–344 is interaction with PCNA; sequence TQGRLDSFF. The span at 365 to 380 shows a compositional bias: basic residues; sequence ASKKAKMSGGKFKKPK.

Belongs to the XPG/RAD2 endonuclease family. FEN1 subfamily. Interacts with PCNA. Three molecules of FEN1 bind to one PCNA trimer with each molecule binding to one PCNA monomer. PCNA stimulates the nuclease activity without altering cleavage specificity. Requires Mg(2+) as cofactor. Post-translationally, phosphorylated. Phosphorylation upon DNA damage induces relocalization to the nuclear plasma.

It localises to the nucleus. Its subcellular location is the nucleolus. The protein resides in the nucleoplasm. It is found in the mitochondrion. Functionally, structure-specific nuclease with 5'-flap endonuclease and 5'-3' exonuclease activities involved in DNA replication and repair. During DNA replication, cleaves the 5'-overhanging flap structure that is generated by displacement synthesis when DNA polymerase encounters the 5'-end of a downstream Okazaki fragment. It enters the flap from the 5'-end and then tracks to cleave the flap base, leaving a nick for ligation. Also involved in the long patch base excision repair (LP-BER) pathway, by cleaving within the apurinic/apyrimidinic (AP) site-terminated flap. Acts as a genome stabilization factor that prevents flaps from equilibrating into structures that lead to duplications and deletions. Also possesses 5'-3' exonuclease activity on nicked or gapped double-stranded DNA, and exhibits RNase H activity. Also involved in replication and repair of rDNA and in repairing mitochondrial DNA. The polypeptide is Flap endonuclease 1 (Branchiostoma floridae (Florida lancelet)).